The following is a 76-amino-acid chain: Sea anemone sodium channel inhibitor type I (76 aa).

Positions 1-19 are cleaved as a signal peptide; sequence MNRMLIIFVVVTVFGLASG. Positions 20–30 are excised as a propeptide; it reads LGPNMPAPDLA. Intrachain disulfides connect cysteine 37/cysteine 72, cysteine 39/cysteine 60, and cysteine 53/cysteine 73.

Belongs to the sea anemone sodium channel inhibitory toxin family. Type I subfamily. As to expression, expressed in acontia, a specialised envenomation structure laden with batteries of venom-containing nematocysts found only in the superfamily Metridioidea.

Its subcellular location is the secreted. The protein localises to the nematocyst. In terms of biological role, may affect sodium channels (Nav). In Calliactis polypus (Hermit crab anemone), this protein is Sea anemone sodium channel inhibitor type I.